The primary structure comprises 1627 residues: Surface protein G (1627 aa).

Residues 1–50 form the signal peptide; the sequence is MRDKKGPVNKRVDFLSNKLNKYSIRKFTVGTASILIGSLMYLGTQQEAEA. The YSIRK-G/S signaling motif signature appears at 22 to 33; the sequence is YSIRKFTVGTAS. The ligand binding A region, squamous nasal epithelial cell binding stretch occupies residues 51-418; the sequence is AENNIENPTT…KGSEFTFTPE (368 aa). 3 disordered regions span residues 74–143, 440–467, and 496–1601; these read EVTN…VRKA, KFNPDLAPGTEKVTREGQKGEKTITTPT, and EYGP…TGLE. 32 stretches are compositionally biased toward basic and acidic residues: residues 96–120, 451–461, 505–523, 554–570, 579–589, 606–619, 633–651, 682–698, 707–717, 736–747, 761–779, 810–826, 835–845, 862–875, 889–907, 938–954, 963–973, 990–1003, 1017–1035, 1066–1082, 1091–1101, 1118–1131, 1145–1163, 1194–1210, 1219–1229, 1246–1259, 1273–1291, 1322–1338, 1347–1357, 1374–1387, 1431–1442, and 1459–1478; these read DTIEHEPSVKAEDISKKEDTPKEVA, KVTREGQKGEK, GHRDEFDPKLPTGEKEEVP, SIVEKEEIPFEKERKFN, SKGESKEEITKDPI, GEPKEEITKDPI, SIVEKEEIPFKKERKFN, SKGESKEEITKDPV, KVIEEPVDDVIK, and FETKREFNPKLQPGEERVKQ. Residues 419-501 form the G5 1 domain; the sequence is APKTITELEK…NELTEYGPET (83 aa). In terms of domain architecture, G5 2 spans 547-629; that stretch reads YGPVKGDSIV…NELTEYGPET (83 aa). The G5 3 domain maps to 675–757; the sequence is YGPVKGDSIV…NELTEYGPET (83 aa). Positions 803 to 885 constitute a G5 4 domain; that stretch reads YGPVKGDSIV…NELTEYGPET (83 aa). The region spanning 931 to 1013 is the G5 5 domain; it reads YGPVKGDSIV…NELTEYGPET (83 aa). A G5 6 domain is found at 1059–1141; that stretch reads YGPVKGDSIV…NELTEYGPET (83 aa). A G5 7 domain is found at 1187 to 1269; that stretch reads YGPVKGDSIV…NELTEYGPET (83 aa). Residues 1315–1397 enclose the G5 8 domain; sequence YGPVKGDSIV…NELTEFGGEK (83 aa). The 83-residue stretch at 1443–1525 folds into the G5 9 domain; it reads HGPKTGTPET…DKIVEFGGEK (83 aa). The segment covering 1481–1495 has biased composition (polar residues); sequence QPGSKTITTPITVNP. Residues 1509-1539 show a composition bias toward basic and acidic residues; that stretch reads EITKQPVDKIVEFGGEKPKDPKGPENPEKPS. The LPXTG sorting signal motif lies at 1595-1599; the sequence is LPKTG. Thr-1598 bears the Pentaglycyl murein peptidoglycan amidated threonine mark. A propeptide spans 1599–1627 (removed by sortase); sequence GLESTQKGLIFSSIIGIAGLMLLARRRKN.

Its subcellular location is the secreted. The protein localises to the cell wall. Promotes adhesion of bacterial cells to human squamous nasal epithelial cells, a phenomenon which is likely to be important in nasal colonization. Forms short, extremely dense and thin fibrils all over the bacterial surface. Does not bind to either buccal cells or non-differentiated keratinocytes. Promotes cellular aggregation leading to biofilm formation. The chain is Surface protein G (sasG) from Staphylococcus aureus (strain NCTC 8325 / PS 47).